Consider the following 94-residue polypeptide: Venom peptide SjAPI (94 aa).

The N-terminal stretch at 1–24 (MKWGALLCIFGFLAFCSVLDRGLG) is a signal peptide. A propeptide spanning residues 25-30 (WIPDIW) is cleaved from the precursor. Cystine bridges form between C33/C70, C43/C66, C47/C62, C51/C92, and C72/C86. Residues 33–92 (CSSKNEEFQQCGSSCPETCANHKNPEPKSCAAVCFVGCVCKPGFIRDDLKGSICVKPEDC) enclose the TIL domain. A protease binding loop region spans residues 63 to 65 (AAV).

Belongs to the serine protease inhibitor-like (TIL domain-containing) family. As to expression, expressed by the venom gland.

It localises to the secreted. Functionally, recombinant protein inhibits both alpha-chymotrypsin (Ki=97.1 nM) and elastase (Ki=3700 nM). In Scorpiops jendeki (Scorpion), this protein is Venom peptide SjAPI.